Reading from the N-terminus, the 151-residue chain is U1 small nuclear ribonucleoprotein C (151 aa).

A Matrin-type zinc finger spans residues Tyr4–Phe36.

It belongs to the U1 small nuclear ribonucleoprotein C family. As to quaternary structure, U1 snRNP is composed of the 7 core Sm proteins B/B', D1, D2, D3, E, F and G that assemble in a heptameric protein ring on the Sm site of the small nuclear RNA to form the core snRNP, and at least 3 U1 snRNP-specific proteins U1-70K, U1-A and U1-C. U1-C interacts with U1 snRNA and the 5' splice-site region of the pre-mRNA.

The protein resides in the nucleus. Component of the spliceosomal U1 snRNP, which is essential for recognition of the pre-mRNA 5' splice-site and the subsequent assembly of the spliceosome. U1-C is directly involved in initial 5' splice-site recognition for both constitutive and regulated alternative splicing. The interaction with the 5' splice-site seems to precede base-pairing between the pre-mRNA and the U1 snRNA. Stimulates commitment or early (E) complex formation by stabilizing the base pairing of the 5' end of the U1 snRNA and the 5' splice-site region. This is U1 small nuclear ribonucleoprotein C from Anopheles darlingi (Mosquito).